Consider the following 222-residue polypeptide: Adenylate kinase (222 aa).

Residue 16–21 (GAGKGT) participates in ATP binding. The interval 36 to 65 (ATGDMLRSQISKGTELGLQAKKIMDQGGLV) is NMP. AMP is bound by residues Thr-37, Arg-42, 63 to 65 (GLV), 92 to 95 (GFPR), and Gln-99. An LID region spans residues 133 to 170 (GRLIHPASGRSYHKLFNPPKEDMKDDVTGEPLVQRSDD). Residues Arg-134 and 143 to 144 (SY) contribute to the ATP site. AMP is bound by residues Arg-167 and Arg-178. Gln-206 contacts ATP.

This sequence belongs to the adenylate kinase family. AK2 subfamily. As to quaternary structure, monomer.

The protein localises to the cytoplasm. Its subcellular location is the cytosol. It localises to the mitochondrion intermembrane space. It catalyses the reaction AMP + ATP = 2 ADP. Catalyzes the reversible transfer of the terminal phosphate group between ATP and AMP. Plays an important role in cellular energy homeostasis and in adenine nucleotide metabolism. Adenylate kinase activity is critical for regulation of the phosphate utilization and the AMP de novo biosynthesis pathways. This is Adenylate kinase from Candida glabrata (strain ATCC 2001 / BCRC 20586 / JCM 3761 / NBRC 0622 / NRRL Y-65 / CBS 138) (Yeast).